Reading from the N-terminus, the 389-residue chain is MRVIAIVLDSVGIGEMPDSSEYGDQGSNTLVNTARAVGKLNLPNLAKMGLGNLDTIEGVPSMPAKGAYGVMLEKSPGKDSTTGHWELAGIILKKPFDLFPNGFPENLIKEFEKRTGRRVIGNKPASGTEIIKELGLEHEQTGALIVYTSADSVFQIAAKEEIVPVEELYRCCEIARDLLDEFGFKVGRVIARPFTGNYPDYVRTPRRHDYSLEPEDEMLLDVLVQSDIPVYGVGKIYDLYAGRGITESYKTDSNIDGIQKTIKLIMEKQHTCFIYTNLVDYDMKYGHRNDPHGYAKALEEFDFNLPEIWKNMKEDDFLFITADHGCDPTTPSTDHSRERVPILVCGSKVRKNVYLGIRESFADFGQTIADLFGVRKLNNGTSFKSLLLH.

Mn(2+) is bound by residues aspartate 9, aspartate 282, histidine 287, aspartate 323, histidine 324, and histidine 335.

This sequence belongs to the phosphopentomutase family. Mn(2+) serves as cofactor.

The protein resides in the cytoplasm. It catalyses the reaction 2-deoxy-alpha-D-ribose 1-phosphate = 2-deoxy-D-ribose 5-phosphate. The enzyme catalyses alpha-D-ribose 1-phosphate = D-ribose 5-phosphate. The protein operates within carbohydrate degradation; 2-deoxy-D-ribose 1-phosphate degradation; D-glyceraldehyde 3-phosphate and acetaldehyde from 2-deoxy-alpha-D-ribose 1-phosphate: step 1/2. In terms of biological role, isomerase that catalyzes the conversion of deoxy-ribose 1-phosphate (dRib-1-P) and ribose 1-phosphate (Rib-1-P) to deoxy-ribose 5-phosphate (dRib-5-P) and ribose 5-phosphate (Rib-5-P), respectively. The polypeptide is Phosphopentomutase (Pseudothermotoga lettingae (strain ATCC BAA-301 / DSM 14385 / NBRC 107922 / TMO) (Thermotoga lettingae)).